A 747-amino-acid chain; its full sequence is Sushi domain-containing protein 1 (747 aa).

An N-terminal signal peptide occupies residues 1–29 (MGRGPWDAGPSRRLLPLLLLLGLARGAAG). Topologically, residues 30–721 (APGPDGLDVC…WAQVKDSSLM (692 aa)) are extracellular. Positions 35-72 (GLDVCATCHEHATCQQREGKKICICNYGFVGNGRTQCV) constitute an EGF-like 1 domain. Disulfide bonds link cysteine 39-cysteine 48, cysteine 42-cysteine 57, cysteine 59-cysteine 71, cysteine 77-cysteine 91, and cysteine 85-cysteine 100. The EGF-like 2; calcium-binding domain maps to 73 to 112 (DKNECQFGATLVCGNHTSCHNTPGGFYCICLEGYRATNNN). Residues asparagine 87 and asparagine 112 are each glycosylated (N-linked (GlcNAc...) asparagine). The 38-residue stretch at 125–162 (DIDECEVSGLCRHGGRCVNTHGSFECYCMDGYLPRNGP) folds into the EGF-like 3; calcium-binding domain. 6 disulfide bridges follow: cysteine 129-cysteine 141, cysteine 135-cysteine 150, cysteine 179-cysteine 221, cysteine 206-cysteine 234, cysteine 239-cysteine 281, and cysteine 266-cysteine 294. Sushi domains are found at residues 177-236 (IDCG…HCQE) and 237-296 (INCG…TCTE). N-linked (GlcNAc...) asparagine glycosylation is present at asparagine 193. The N-linked (GlcNAc...) asparagine glycan is linked to asparagine 253. N-linked (GlcNAc...) asparagine glycans are attached at residues asparagine 348, asparagine 367, and asparagine 563. A helical transmembrane segment spans residues 722–742 (LLQMAGVGLGSLAVVIILTFL). Residues 743–747 (SFSAV) lie on the Cytoplasmic side of the membrane.

The protein resides in the membrane. This is Sushi domain-containing protein 1 (SUSD1) from Homo sapiens (Human).